A 347-amino-acid chain; its full sequence is NADH-ubiquinone oxidoreductase chain 2 (347 aa).

A run of 10 helical transmembrane segments spans residues proline 3–serine 23, histidine 25–methionine 45, alanine 66–isoleucine 86, phenylalanine 111–leucine 131, isoleucine 149–glycine 169, isoleucine 178–proline 198, methionine 201–leucine 221, isoleucine 237–leucine 257, aspartate 274–methionine 294, and leucine 325–isoleucine 345.

The protein belongs to the complex I subunit 2 family. Core subunit of respiratory chain NADH dehydrogenase (Complex I) which is composed of 45 different subunits. Interacts with TMEM242.

The protein resides in the mitochondrion inner membrane. The catalysed reaction is a ubiquinone + NADH + 5 H(+)(in) = a ubiquinol + NAD(+) + 4 H(+)(out). Functionally, core subunit of the mitochondrial membrane respiratory chain NADH dehydrogenase (Complex I) which catalyzes electron transfer from NADH through the respiratory chain, using ubiquinone as an electron acceptor. Essential for the catalytic activity and assembly of complex I. In Vulpes vulpes (Red fox), this protein is NADH-ubiquinone oxidoreductase chain 2.